Consider the following 385-residue polypeptide: Succinate--CoA ligase [ADP-forming] subunit beta (385 aa).

Residues 9–241 form the ATP-grasp domain; the sequence is KELLRDFGIN…IDEEEPSELE (233 aa). ATP contacts are provided by residues K46, 53-55, E99, T102, and E107; that span reads GRG. Mg(2+) is bound by residues N196 and D210. Residues N261 and 318–320 contribute to the substrate site; that span reads GIV.

Belongs to the succinate/malate CoA ligase beta subunit family. As to quaternary structure, heterotetramer of two alpha and two beta subunits. It depends on Mg(2+) as a cofactor.

The catalysed reaction is succinate + ATP + CoA = succinyl-CoA + ADP + phosphate. It catalyses the reaction GTP + succinate + CoA = succinyl-CoA + GDP + phosphate. Its pathway is carbohydrate metabolism; tricarboxylic acid cycle; succinate from succinyl-CoA (ligase route): step 1/1. Its function is as follows. Succinyl-CoA synthetase functions in the citric acid cycle (TCA), coupling the hydrolysis of succinyl-CoA to the synthesis of either ATP or GTP and thus represents the only step of substrate-level phosphorylation in the TCA. The beta subunit provides nucleotide specificity of the enzyme and binds the substrate succinate, while the binding sites for coenzyme A and phosphate are found in the alpha subunit. This is Succinate--CoA ligase [ADP-forming] subunit beta from Campylobacter fetus subsp. fetus (strain 82-40).